Here is an 848-residue protein sequence, read N- to C-terminus: Nuclear cap-binding protein subunit 1 (848 aa).

One can recognise an MIF4G domain in the interval 8–228; sequence LLRIGEKGPE…DLLDRIQSLA (221 aa). Residues 767–786 are disordered; that stretch reads EDDKPSAMDVDSENGNPKKS.

Belongs to the NCBP1 family. As to quaternary structure, component of the nuclear cap-binding complex (CBC), a heterodimer composed of ABH1/CBP80 and CBP20 that interacts with m7GpppG-capped RNA. In terms of tissue distribution, expressed in all tissues analyzed, including roots, stems, leaves and flowers.

Its subcellular location is the nucleus. It localises to the cytoplasm. Component of the cap-binding complex (CBC), which binds cotranscriptionally to the 5'-cap of pre-mRNAs and is involved in various processes such as pre-mRNA splicing and RNA-mediated gene silencing (RNAi) by microRNAs (miRNAs). The CBC complex is involved in miRNA-mediated RNA interference and is required for primary miRNA processing. In the CBC complex, ABH1/CBP80 does not bind directly capped RNAs (m7GpppG-capped RNA) but is required to stabilize the movement of the N-terminal loop of CBP20 and lock the CBC into a high affinity cap-binding state with the cap structure. Involved in flowering regulation, possibly by regulating pre-mRNA splicing of FLC gene. Acts as a negative regulator of abscisic acid signaling in guard cells. The polypeptide is Nuclear cap-binding protein subunit 1 (ABH1) (Arabidopsis thaliana (Mouse-ear cress)).